A 431-amino-acid polypeptide reads, in one-letter code: Intraflagellar transport protein 38 (431 aa).

The stretch at 177-218 forms a coiled coil; that stretch reads SAAVQQRIKNLAAECNTLQEEVTTNKREKAKLEEQITQKKQS. Residues 346 to 431 form a disordered region; sequence INTNAEIPDD…EELDPDNIEF (86 aa). Positions 352-370 are enriched in acidic residues; that stretch reads IPDDESYSYSYEEEEEEEQ. Residues 384–405 are compositionally biased toward basic and acidic residues; that stretch reads PETHSNGEKHRGLDELSHKSNE. Residues 420 to 431 show a composition bias toward acidic residues; that stretch reads GGEELDPDNIEF.

This sequence belongs to the CLUAP1 family.

The protein localises to the cell projection. Its subcellular location is the cilium. The protein resides in the flagellum. It is found in the cytoplasm. It localises to the cytoskeleton. The protein localises to the flagellum axoneme. Its subcellular location is the flagellum basal body. Functionally, component of the intraflagellar transport complex B (IFT-B) involved in flagellar assembly. This is Intraflagellar transport protein 38 from Giardia intestinalis (strain ATCC 50803 / WB clone C6) (Giardia lamblia).